A 111-amino-acid polypeptide reads, in one-letter code: Translation initiation factor 1A (111 aa).

Residues 12–86 (GEMPLPSEDE…KKGEVVYRYL (75 aa)) enclose the S1-like domain.

The protein belongs to the eIF-1A family.

In terms of biological role, seems to be required for maximal rate of protein biosynthesis. Enhances ribosome dissociation into subunits and stabilizes the binding of the initiator Met-tRNA(I) to 40 S ribosomal subunits. The polypeptide is Translation initiation factor 1A (eIF1A) (Aeropyrum pernix (strain ATCC 700893 / DSM 11879 / JCM 9820 / NBRC 100138 / K1)).